The primary structure comprises 98 residues: DNA-binding protein Fis (98 aa).

The H-T-H motif DNA-binding region spans 74–93 (QTRAATMMGINRGTLRKKLK).

The protein belongs to the transcriptional regulatory Fis family. As to quaternary structure, homodimer.

Functionally, activates ribosomal RNA transcription. Plays a direct role in upstream activation of rRNA promoters. The sequence is that of DNA-binding protein Fis from Vibrio parahaemolyticus serotype O3:K6 (strain RIMD 2210633).